Reading from the N-terminus, the 351-residue chain is UDP-3-O-acylglucosamine N-acyltransferase (351 aa).

His240 functions as the Proton acceptor in the catalytic mechanism.

This sequence belongs to the transferase hexapeptide repeat family. LpxD subfamily. Homotrimer.

The enzyme catalyses a UDP-3-O-[(3R)-3-hydroxyacyl]-alpha-D-glucosamine + a (3R)-hydroxyacyl-[ACP] = a UDP-2-N,3-O-bis[(3R)-3-hydroxyacyl]-alpha-D-glucosamine + holo-[ACP] + H(+). Its pathway is bacterial outer membrane biogenesis; LPS lipid A biosynthesis. In terms of biological role, catalyzes the N-acylation of UDP-3-O-acylglucosamine using 3-hydroxyacyl-ACP as the acyl donor. Is involved in the biosynthesis of lipid A, a phosphorylated glycolipid that anchors the lipopolysaccharide to the outer membrane of the cell. The protein is UDP-3-O-acylglucosamine N-acyltransferase of Pseudomonas fluorescens (strain Pf0-1).